An 88-amino-acid chain; its full sequence is UPF0250 protein Shew_2940 (88 aa).

This sequence belongs to the UPF0250 family.

This chain is UPF0250 protein Shew_2940, found in Shewanella loihica (strain ATCC BAA-1088 / PV-4).